A 1372-amino-acid polypeptide reads, in one-letter code: DNA-directed RNA polymerase subunit beta (1372 aa).

Belongs to the RNA polymerase beta chain family. In terms of assembly, the RNAP catalytic core consists of 2 alpha, 1 beta, 1 beta' and 1 omega subunit. When a sigma factor is associated with the core the holoenzyme is formed, which can initiate transcription.

It catalyses the reaction RNA(n) + a ribonucleoside 5'-triphosphate = RNA(n+1) + diphosphate. Functionally, DNA-dependent RNA polymerase catalyzes the transcription of DNA into RNA using the four ribonucleoside triphosphates as substrates. This chain is DNA-directed RNA polymerase subunit beta, found in Rickettsia bellii (strain OSU 85-389).